The primary structure comprises 293 residues: tRNA-cytidine(32) 2-sulfurtransferase (293 aa).

Residues 62 to 67 (SGGKDS) carry the PP-loop motif motif. Residues Cys-137, Cys-140, and Cys-228 each contribute to the [4Fe-4S] cluster site.

It belongs to the TtcA family. Homodimer. Mg(2+) serves as cofactor. Requires [4Fe-4S] cluster as cofactor.

It is found in the cytoplasm. The enzyme catalyses cytidine(32) in tRNA + S-sulfanyl-L-cysteinyl-[cysteine desulfurase] + AH2 + ATP = 2-thiocytidine(32) in tRNA + L-cysteinyl-[cysteine desulfurase] + A + AMP + diphosphate + H(+). The protein operates within tRNA modification. Functionally, catalyzes the ATP-dependent 2-thiolation of cytidine in position 32 of tRNA, to form 2-thiocytidine (s(2)C32). The sulfur atoms are provided by the cysteine/cysteine desulfurase (IscS) system. This chain is tRNA-cytidine(32) 2-sulfurtransferase, found in Brucella suis (strain ATCC 23445 / NCTC 10510).